The sequence spans 205 residues: Large ribosomal subunit protein uL4 (205 aa).

It belongs to the universal ribosomal protein uL4 family. As to quaternary structure, part of the 50S ribosomal subunit. Contacts proteins L15 and L34.

In terms of biological role, one of the primary rRNA binding proteins, this protein initially binds near the 5'-end of the 23S rRNA. It is important during the early stages of 50S assembly. Makes multiple contacts with different domains of the 23S rRNA in the assembled 50S subunit. Its function is as follows. This protein is located close to the polypeptide exit tunnel, and interacts with the modified macrolide azithromycin, which blocks the tunnel. This Deinococcus radiodurans (strain ATCC 13939 / DSM 20539 / JCM 16871 / CCUG 27074 / LMG 4051 / NBRC 15346 / NCIMB 9279 / VKM B-1422 / R1) protein is Large ribosomal subunit protein uL4 (rplD).